The chain runs to 835 residues: MKVLALRHSVAQVYADTQIYTHDETKDDYENAFLISNLTTHNILYLNYSVKTLQILNKSGIAAVEIQEMDELFTLIRCNFTYDYIDDIVYLHDYSYYTNNEIRTDQHWVTKTNIEDYLLPGWKLTYVGYNGNDTRGHYNFSFKCQNAATDDDAIIEYIYSNELDFQNFILKKIKERMTTSLPIARLSNRVFRDKLFKTLVSDHSRVVNVGPRNESMFTFLDHPSIKQFSNGPYLVKDTIKLKQERWLGKRLSQFDIGQYKNMLNVLTTLYQYYDMYHEKPIIYMVGSAPSYWIHDVRQYSNLKFETWDPLDTPYSDLHHKELFYISDVTKLKDNSILYVDIRTDRENTDWKAWRKIVEEQTINNLNIAYKYLSTGKAKVCCVKMTAMDLELPISAKLLHHPTTEIRSEFYLIMDIWDSKNIKRFIPKGVLYSYINNVITENVFIQQPFKLKTLRNEYVVALYALSNDFNNREDVIKLVNNQKNALITVRINNTFKDEPKVGFKDIYDWTFLPTDFETNESIITSYDGCLGMFGLSISLASKPTGNNHLFILSGTNKYFKLDQFANHMSISRRSHQIRFSESATSYSGYIFRDLSNNNFNLIGTNVENSVSGHVYNALIYYRYNYSFDLKRWIYLHATNKAGIEGGRYYEHAPIELIYACRSAKEFAKLQDDLTVLRYSNEIEDYINKVYSITYADDPNYFIGIKFKNIPYEYDVKVPHLTFGVLNISDSMVPDVVAILKKFKSELFRMDVTTSYTYMLSDEIYVANVSGVLSTYFKLYNAFYKEQITFGQSRMFIPHITLSFSNKKVVRIDSTRLNIDFIYLRKIKGDTVFDMTE.

Residues 171-245 form an N7-methyltransferase activity region; it reads KKIKERMTTS…KDTIKLKQER (75 aa). The interval 246-428 is 2'-O-methyltransferase activity; it reads WLGKRLSQFD…KNIKRFIPKG (183 aa). The N7-methyltransferase activity stretch occupies residues 429–555; sequence VLYSYINNVI…NHLFILSGTN (127 aa). The interval 556–692 is GTase/RTPase activity; the sequence is KYFKLDQFAN…DYINKVYSIT (137 aa). A 2'-5'-phosphodiesterase activity region spans residues 693–835; it reads YADDPNYFIG…KGDTVFDMTE (143 aa). Catalysis depends on for 2'-5'-phosphodiesterase activity residues His718, Thr720, His797, and Thr799.

This sequence belongs to the rotavirus VP3 family. As to quaternary structure, interacts with VP1. Interacts with VP2.

The protein resides in the virion. The catalysed reaction is a 5'-end diphospho-ribonucleoside in mRNA + GTP + H(+) = a 5'-end (5'-triphosphoguanosine)-ribonucleoside in mRNA + diphosphate. The enzyme catalyses a 5'-end (5'-triphosphoguanosine)-ribonucleoside in mRNA + S-adenosyl-L-methionine = a 5'-end (N(7)-methyl 5'-triphosphoguanosine)-ribonucleoside in mRNA + S-adenosyl-L-homocysteine. It catalyses the reaction 5'-triphosphoadenylyl-(2'-&gt;5')-adenylyl-(2'-&gt;5')-adenosine + 2 H2O = 2 AMP + ATP + 2 H(+). In terms of biological role, multifunctional enzyme involved in mRNA capping. Catalyzes the formation of the 5' cap structure on the viral plus-strand transcripts. Specifically binds to GTP and displays guanylyltransferase and methyltransferase activities. Has affinity for ssRNA but not for dsRNA. Capping activity is non-specific and caps RNAs that initiate with either a G or an A residue. Together with VP1 polymerase, forms a VP1-VP3 complex positioned near the channels situated at each of the five-fold vertices of the core. Following infection, the outermost layer of the virus is lost, leaving a double-layered particle (DLP) made up of the core and VP6 shell. VP1 then catalyzes the transcription of fully conservative plus-strand genomic RNAs that are capped by VP3 and extruded through the DLP's channels into the cytoplasm where they function as mRNAs for translation of viral proteins. DLPs probably have an RNA triphosphatase activity as well, whereas open cores do not. Counteracts the host innate immune response thanks to its phosphodiesterase that degrades the 5'-triphosphorylated, 2'-5' linked adenylate oligomers produced by the host cell IFN-inducible 2',5'-oligoadenylate synthetase (OAS). The host RNaseL is therefore not activated. This Bos taurus (Bovine) protein is Protein VP3.